A 177-amino-acid polypeptide reads, in one-letter code: Large ribosomal subunit protein uL6 (177 aa).

Basic and acidic residues predominate over residues 157–171; that stretch reads YKGKGVRYSDENVRR. The disordered stretch occupies residues 157-177; the sequence is YKGKGVRYSDENVRRKEAKKK.

Belongs to the universal ribosomal protein uL6 family. As to quaternary structure, part of the 50S ribosomal subunit.

Its function is as follows. This protein binds to the 23S rRNA, and is important in its secondary structure. It is located near the subunit interface in the base of the L7/L12 stalk, and near the tRNA binding site of the peptidyltransferase center. The polypeptide is Large ribosomal subunit protein uL6 (Pseudoalteromonas translucida (strain TAC 125)).